The chain runs to 145 residues: NADH-ubiquinone oxidoreductase subunit 8 (145 aa).

4Fe-4S ferredoxin-type domains lie at 43–73 and 83–112; these read LRFY…VRVG and DWFT…HSLF. Positions 53, 56, 59, 63, 92, 95, 98, and 102 each coordinate [4Fe-4S] cluster.

The protein belongs to the complex I 23 kDa subunit family. The cofactor is [4Fe-4S] cluster.

Its subcellular location is the mitochondrion. It catalyses the reaction a ubiquinone + NADH + 5 H(+)(in) = a ubiquinol + NAD(+) + 4 H(+)(out). Core subunit of the mitochondrial membrane respiratory chain NADH dehydrogenase (Complex I) that is believed to belong to the minimal assembly required for catalysis. Complex I functions in the transfer of electrons from NADH to the respiratory chain. The immediate electron acceptor for the enzyme is believed to be ubiquinone. May donate electrons to ubiquinone. The sequence is that of NADH-ubiquinone oxidoreductase subunit 8 (M-ISP1) from Trypanosoma brucei brucei.